The following is a 722-amino-acid chain: Phenylalanine ammonia-lyase lenB (722 aa).

Tyr-83 functions as the Proton donor/acceptor in the catalytic mechanism. Residues 117-136 are disordered; the sequence is LPTDRSSSRPSSRYPHGLRS. The 5-imidazolinone (Ala-Gly) cross-link spans 190–192; it reads ASG. Ser-191 is subject to 2,3-didehydroalanine (Ser). Positions 247, 334, 340, 370, 441, 469, and 472 each coordinate (E)-cinnamate.

It belongs to the PAL/histidase family. Post-translationally, contains an active site 4-methylidene-imidazol-5-one (MIO), which is formed autocatalytically by cyclization and dehydration of residues Ala-Ser-Gly.

The catalysed reaction is L-phenylalanine = (E)-cinnamate + NH4(+). It functions in the pathway alkaloid biosynthesis. Its function is as follows. Phenylalanine ammonia-lyase; part of the gene cluster that mediates the biosynthesis of the ergot alkaloids lentopeptins A and B. Within the pathway, lenB provides the cinnamic acid starter unit for the synthesis of the N-acyldiketopiperazine intermediate by the NRPS lenA. Cinnamic acid is condensed with the Ala-Val-Ala peptide chain by lenA which leads to the N-acyldiketopiperazine intermediate which in turn is converted into lentopeptins A and B by the cytochrome P450 monooxygenase lenC. The protein is Phenylalanine ammonia-lyase lenB of Aspergillus lentulus.